We begin with the raw amino-acid sequence, 172 residues long: Thioredoxin M-type, chloroplastic (172 aa).

Residues 1–60 constitute a chloroplast transit peptide; the sequence is MALESLFKSIHTKTSLSSSIVFIFKGKACLLTSKSRIQESFAELNSFTSLVLLIENHVLL. Residues 61–172 form the Thioredoxin domain; the sequence is HAREAVNEVQ…TLSEKVEKYI (112 aa). Catalysis depends on nucleophile residues cysteine 97 and cysteine 100. Cysteine 97 and cysteine 100 form a disulfide bridge.

It belongs to the thioredoxin family. Plant M-type subfamily. As to quaternary structure, forms a complex with heterodimeric ferredoxin-thioredoxin reductase (FTR) and ferredoxin.

It localises to the plastid. The protein resides in the chloroplast. Its function is as follows. Participates in various redox reactions through the reversible oxidation of the active center dithiol to a disulfide. The M form is known to activate NADP-malate dehydrogenase. The protein is Thioredoxin M-type, chloroplastic of Pisum sativum (Garden pea).